A 310-amino-acid chain; its full sequence is tRNA-cytidine(32) 2-sulfurtransferase (310 aa).

The PP-loop motif motif lies at 47-52 (SGGKDS). [4Fe-4S] cluster is bound by residues C122, C125, and C213.

It belongs to the TtcA family. In terms of assembly, homodimer. Mg(2+) is required as a cofactor. Requires [4Fe-4S] cluster as cofactor.

The protein localises to the cytoplasm. The enzyme catalyses cytidine(32) in tRNA + S-sulfanyl-L-cysteinyl-[cysteine desulfurase] + AH2 + ATP = 2-thiocytidine(32) in tRNA + L-cysteinyl-[cysteine desulfurase] + A + AMP + diphosphate + H(+). It functions in the pathway tRNA modification. Its function is as follows. Catalyzes the ATP-dependent 2-thiolation of cytidine in position 32 of tRNA, to form 2-thiocytidine (s(2)C32). The sulfur atoms are provided by the cysteine/cysteine desulfurase (IscS) system. This chain is tRNA-cytidine(32) 2-sulfurtransferase, found in Cronobacter sakazakii (strain ATCC BAA-894) (Enterobacter sakazakii).